The sequence spans 159 residues: Large ribosomal subunit protein uL11 (159 aa).

Belongs to the universal ribosomal protein uL11 family. In terms of assembly, part of the ribosomal stalk of the 50S ribosomal subunit. Interacts with L10 and the large rRNA to form the base of the stalk. L10 forms an elongated spine to which L12 dimers bind in a sequential fashion forming a multimeric L10(L12)X complex.

Forms part of the ribosomal stalk which helps the ribosome interact with GTP-bound translation factors. This chain is Large ribosomal subunit protein uL11, found in Methanococcus maripaludis (strain DSM 14266 / JCM 13030 / NBRC 101832 / S2 / LL).